The following is a 220-amino-acid chain: MKYIKIYILRNKKFKNQNINFLKIKPFNCPNYNFFGNEIRRSLLLNIKKTMTITNIKFFISKSKSKHPKKLKIFHPVNEFFDIEEIKENLSNICINLKKLRFKFNPKNNKEKKTFIILNSFNKKSFSAKDIIIPSTSNLKIVNLKEHLFNKISQKINLKVLIKIENNENYFYNPIKRINFILEKNNNIGKYIILDLNSDININPFKAFIESLKYLNLNNT.

This sequence belongs to the RNA polymerase alpha chain family. In plastids the minimal PEP RNA polymerase catalytic core is composed of four subunits: alpha, beta, beta', and beta''. When a (nuclear-encoded) sigma factor is associated with the core the holoenzyme is formed, which can initiate transcription.

The protein localises to the plastid. It carries out the reaction RNA(n) + a ribonucleoside 5'-triphosphate = RNA(n+1) + diphosphate. In terms of biological role, DNA-dependent RNA polymerase catalyzes the transcription of DNA into RNA using the four ribonucleoside triphosphates as substrates. The sequence is that of DNA-directed RNA polymerase subunit alpha (rpoA) from Euglena longa (Euglenophycean alga).